Here is a 580-residue protein sequence, read N- to C-terminus: Pescadillo homolog (580 aa).

Positions 291–303 are enriched in acidic residues; it reads EPEEENEVDEFPA. Residues 291–321 form a disordered region; that stretch reads EPEEENEVDEFPADPENAGQEEEQKKQLQEE. Residues 312–321 show a composition bias toward basic and acidic residues; sequence EEQKKQLQEE. A BRCT domain is found at 323–416; sequence KHKSMFVGLK…MLLPVEDYFP (94 aa). The segment at 448–496 is disordered; the sequence is KGENPEDDDDDDEEDDEDEEEDDEDEDDEENEEEEEDKKLRHLENKKVG. A compositionally biased stretch (acidic residues) spans 452 to 483; sequence PEDDDDDDEEDDEDEEEDDEDEDDEENEEEEE. A compositionally biased stretch (basic and acidic residues) spans 484–494; it reads DKKLRHLENKK.

The protein belongs to the pescadillo family. As to quaternary structure, component of the PeBoW complex, composed of bop1, pes1 and wdr12. The complex is held together by bop1, which interacts with pes1 via its N-terminal domain and with wdr12 via a high-affinity interaction between the seven-bladed beta-propeller domains of the 2 proteins. The PeBoW complex associates with the 66S pre-ribosome.

It localises to the nucleus. The protein resides in the nucleolus. Its subcellular location is the nucleoplasm. Functionally, component of the PeBoW complex, which is required for maturation of 28S and 5.8S ribosomal RNAs and formation of the 60S ribosome. The sequence is that of Pescadillo homolog (pes1) from Xenopus tropicalis (Western clawed frog).